Consider the following 356-residue polypeptide: NADH-quinone oxidoreductase subunit H (356 aa).

A run of 8 helical transmembrane segments spans residues 4 to 24, 79 to 99, 127 to 147, 166 to 186, 198 to 218, 251 to 271, 289 to 309, and 329 to 349; these read ALILAWGIKILSLFFVILTGV, LLAPTISMTCAIMAWAVIPFG, GVLYMLAISSLSVYGIMIAGW, ISYELPMGLSIVAIVIMTGSL, MWNILSPPGFVAFFIYVTAMF, FFLAEYMNMITMSCLTTLLFF, FIGLGFFILKVLFFAFLFIWV, and MIPWGLFVVMFASIYTVYWKE.

It belongs to the complex I subunit 1 family. As to quaternary structure, NDH-1 is composed of 14 different subunits. Subunits NuoA, H, J, K, L, M, N constitute the membrane sector of the complex.

Its subcellular location is the cell inner membrane. It catalyses the reaction a quinone + NADH + 5 H(+)(in) = a quinol + NAD(+) + 4 H(+)(out). Its function is as follows. NDH-1 shuttles electrons from NADH, via FMN and iron-sulfur (Fe-S) centers, to quinones in the respiratory chain. The immediate electron acceptor for the enzyme in this species is believed to be ubiquinone. Couples the redox reaction to proton translocation (for every two electrons transferred, four hydrogen ions are translocated across the cytoplasmic membrane), and thus conserves the redox energy in a proton gradient. This subunit may bind ubiquinone. The chain is NADH-quinone oxidoreductase subunit H from Leptospira biflexa serovar Patoc (strain Patoc 1 / ATCC 23582 / Paris).